We begin with the raw amino-acid sequence, 227 residues long: Cytochrome c oxidase subunit 2 (227 aa).

Residues 1–14 (MAHPVQLGLQDATS) lie on the Mitochondrial intermembrane side of the membrane. Residues 15–45 (PVMEELITFHDHALMAMSLISLLVLYALFST) traverse the membrane as a helical segment. The Mitochondrial matrix portion of the chain corresponds to 46–59 (LTTKLTNTNITDAQ). A helical transmembrane segment spans residues 60–87 (EMEIIWTILPAIILVLIALPSLRILYLT). Topologically, residues 88–227 (DEVNNPSFTI…IFEMGPVFTL (140 aa)) are mitochondrial intermembrane. The Cu cation site is built by histidine 161, cysteine 196, glutamate 198, cysteine 200, histidine 204, and methionine 207. Glutamate 198 provides a ligand contact to Mg(2+).

The protein belongs to the cytochrome c oxidase subunit 2 family. In terms of assembly, component of the cytochrome c oxidase (complex IV, CIV), a multisubunit enzyme composed of 14 subunits. The complex is composed of a catalytic core of 3 subunits MT-CO1, MT-CO2 and MT-CO3, encoded in the mitochondrial DNA, and 11 supernumerary subunits COX4I, COX5A, COX5B, COX6A, COX6B, COX6C, COX7A, COX7B, COX7C, COX8 and NDUFA4, which are encoded in the nuclear genome. The complex exists as a monomer or a dimer and forms supercomplexes (SCs) in the inner mitochondrial membrane with NADH-ubiquinone oxidoreductase (complex I, CI) and ubiquinol-cytochrome c oxidoreductase (cytochrome b-c1 complex, complex III, CIII), resulting in different assemblies (supercomplex SCI(1)III(2)IV(1) and megacomplex MCI(2)III(2)IV(2)). Found in a complex with TMEM177, COA6, COX18, COX20, SCO1 and SCO2. Interacts with TMEM177 in a COX20-dependent manner. Interacts with COX20. Interacts with COX16. It depends on Cu cation as a cofactor.

It localises to the mitochondrion inner membrane. It carries out the reaction 4 Fe(II)-[cytochrome c] + O2 + 8 H(+)(in) = 4 Fe(III)-[cytochrome c] + 2 H2O + 4 H(+)(out). Component of the cytochrome c oxidase, the last enzyme in the mitochondrial electron transport chain which drives oxidative phosphorylation. The respiratory chain contains 3 multisubunit complexes succinate dehydrogenase (complex II, CII), ubiquinol-cytochrome c oxidoreductase (cytochrome b-c1 complex, complex III, CIII) and cytochrome c oxidase (complex IV, CIV), that cooperate to transfer electrons derived from NADH and succinate to molecular oxygen, creating an electrochemical gradient over the inner membrane that drives transmembrane transport and the ATP synthase. Cytochrome c oxidase is the component of the respiratory chain that catalyzes the reduction of oxygen to water. Electrons originating from reduced cytochrome c in the intermembrane space (IMS) are transferred via the dinuclear copper A center (CU(A)) of subunit 2 and heme A of subunit 1 to the active site in subunit 1, a binuclear center (BNC) formed by heme A3 and copper B (CU(B)). The BNC reduces molecular oxygen to 2 water molecules using 4 electrons from cytochrome c in the IMS and 4 protons from the mitochondrial matrix. The sequence is that of Cytochrome c oxidase subunit 2 (MT-CO2) from Cercocebus galeritus (Tana river mangabey).